Reading from the N-terminus, the 59-residue chain is UPF0434 protein Pnec_0311 (59 aa).

Belongs to the UPF0434 family.

This chain is UPF0434 protein Pnec_0311, found in Polynucleobacter necessarius subsp. necessarius (strain STIR1).